Here is a 961-residue protein sequence, read N- to C-terminus: Valine--tRNA ligase (961 aa).

Residues 48-58 (PNVTGSLHMGH) carry the 'HIGH' region motif. The 'KMSKS' region signature appears at 560 to 564 (KMSKS). Lysine 563 contacts ATP. Residues 892 to 961 (FINKDTELAR…QAQFKAIEAL (70 aa)) adopt a coiled-coil conformation.

This sequence belongs to the class-I aminoacyl-tRNA synthetase family. ValS type 1 subfamily. Monomer.

It localises to the cytoplasm. The enzyme catalyses tRNA(Val) + L-valine + ATP = L-valyl-tRNA(Val) + AMP + diphosphate. In terms of biological role, catalyzes the attachment of valine to tRNA(Val). As ValRS can inadvertently accommodate and process structurally similar amino acids such as threonine, to avoid such errors, it has a 'posttransfer' editing activity that hydrolyzes mischarged Thr-tRNA(Val) in a tRNA-dependent manner. The polypeptide is Valine--tRNA ligase (Haemophilus ducreyi (strain 35000HP / ATCC 700724)).